The sequence spans 160 residues: MAPDRALAAQARPEQEFFCFRVGDLRLGVPSENVLEVLRAGLLTPLPRTPSFIMGVTGHRGEVLPVLDLLRFLSKGEARIGPRTRLFVGVTGSYVAGVVADTVLGLRRIPVADILPPPLGGDAAAEHLLGVVQASGNQEAINLLNFSKLLQTARQRAVAR.

A CheW-like domain is found at 14–155 (EQEFFCFRVG…FSKLLQTARQ (142 aa)).

Functionally, necessary for proper aggregation of cells to form fruiting bodies. FRZ genes define a system of signal transduction analogous to the enterobacterial chemotaxis systems. The polypeptide is Protein FrzA (frzA) (Myxococcus xanthus).